A 383-amino-acid chain; its full sequence is 8-amino-7-oxononanoate synthase (383 aa).

Position 23 (Arg-23) interacts with substrate. Gly-110 to Phe-111 lines the pyridoxal 5'-phosphate pocket. A substrate-binding site is contributed by His-135. The pyridoxal 5'-phosphate site is built by Ser-181, His-209, and Thr-235. The residue at position 238 (Lys-238) is an N6-(pyridoxal phosphate)lysine. Substrate is bound at residue Thr-351.

Belongs to the class-II pyridoxal-phosphate-dependent aminotransferase family. BioF subfamily. As to quaternary structure, homodimer. Requires pyridoxal 5'-phosphate as cofactor.

It catalyses the reaction 6-carboxyhexanoyl-[ACP] + L-alanine + H(+) = (8S)-8-amino-7-oxononanoate + holo-[ACP] + CO2. It participates in cofactor biosynthesis; biotin biosynthesis. Catalyzes the decarboxylative condensation of pimeloyl-[acyl-carrier protein] and L-alanine to produce 8-amino-7-oxononanoate (AON), [acyl-carrier protein], and carbon dioxide. This is 8-amino-7-oxononanoate synthase from Aliivibrio fischeri (strain MJ11) (Vibrio fischeri).